A 308-amino-acid polypeptide reads, in one-letter code: Transaldolase (308 aa).

The Schiff-base intermediate with substrate role is filled by Lys125.

The protein belongs to the transaldolase family. Type 1 subfamily. Homodimer.

Its subcellular location is the cytoplasm. It catalyses the reaction D-sedoheptulose 7-phosphate + D-glyceraldehyde 3-phosphate = D-erythrose 4-phosphate + beta-D-fructose 6-phosphate. Its pathway is carbohydrate degradation; pentose phosphate pathway; D-glyceraldehyde 3-phosphate and beta-D-fructose 6-phosphate from D-ribose 5-phosphate and D-xylulose 5-phosphate (non-oxidative stage): step 2/3. Transaldolase is important for the balance of metabolites in the pentose-phosphate pathway. The protein is Transaldolase of Pseudomonas fluorescens (strain ATCC BAA-477 / NRRL B-23932 / Pf-5).